Consider the following 473-residue polypeptide: MTRGRVIQVMGPVVDVKFENGHLPAIYNALKIQHKARNENEVDIDLTLEVALHLGDDTVRTIAMASTDGLIRGMEVIDTGAPISVPVGEVTLGRVFNVLGEPIDLEGDIPADARRDPIHRPAPKFEELATEVEILETGIKVVDLLAPYIKGGKIGLFGGAGVGKTVLIQELIHNIAQEHGGISVFAGVGERTREGNDLYHEMKDSGVISKTAMVFGQMNEPPGARMRVALTGLTMAEYFRDEQGQDVLLFIDNIFRFTQAGSEVSALLGRMPSAVGYQPTLATEMGQLQERITSTAKGSITSIQAIYVPADDYTDPAPATTFSHLDATTNLERKLAEMGIYPAVDPLASTSRALAPEIVGEEHYQVARKVQQTLQRYKELQDIIAILGMDELSDEDKLVVHRARRIQFFLSQNFHVAEQFTGQPGSYVPVKETVRGFKEILEGKYDHLPEDAFRLVGRIEEVVEKAKAMGVEV.

Glycine 158–threonine 165 contacts ATP.

Belongs to the ATPase alpha/beta chains family. F-type ATPases have 2 components, CF(1) - the catalytic core - and CF(0) - the membrane proton channel. CF(1) has five subunits: alpha(3), beta(3), gamma(1), delta(1), epsilon(1). CF(0) has three main subunits: a(1), b(2) and c(9-12). The alpha and beta chains form an alternating ring which encloses part of the gamma chain. CF(1) is attached to CF(0) by a central stalk formed by the gamma and epsilon chains, while a peripheral stalk is formed by the delta and b chains.

The protein localises to the cell membrane. The catalysed reaction is ATP + H2O + 4 H(+)(in) = ADP + phosphate + 5 H(+)(out). Produces ATP from ADP in the presence of a proton gradient across the membrane. The catalytic sites are hosted primarily by the beta subunits. This Geobacillus kaustophilus (strain HTA426) protein is ATP synthase subunit beta.